The following is a 519-amino-acid chain: MDERPETELISIPATPRVSTPEILTPSGQRSPRPATKPSSATWTPTSFISPRFLSPIGTPMKRVLVNMKGYLEEVGHLTKLNPQDAWLPITESRNGNAHYAAFHNLNAGVGFQALVLPVAFAFLGWSWGILSLTIAYCWQLYTLWILVQLHEAVPGKRYNRYVELAQAAFGERLGVWLALFPTVYLSAGTATALILIGGETMKLFFQIVCGPLCTSNPLTTVEWYLVFTSLCIVLSQLPNLNSIAGLSLIGAVTAITYSTMVWVLSVSQPRPATISYEPLSMPSTSGSLFAVLNALGIIAFAFRGHNLVLEIQSTMPSTFKHPAHVPMWRGAKISYFLIALCIFPISIGGFWAYGNLMPSGGMLAALYAFHIHDIPRGLLATAFLLVVFSCLSSFQIYSMPAFDSFEAGYTSRTNKPCSIWVRSGFRVFFGFVSFFIGVALPFLSSLAGLLGGLTLPVTFAYPCFMWVLIKKPAKYSFNWYFHWGLGWLGVAFSLAFSIGGIWSMVTNGLKLKFFKPPN.

Residues 1 to 44 (MDERPETELISIPATPRVSTPEILTPSGQRSPRPATKPSSATWT) form a disordered region. The Cytoplasmic segment spans residues 1 to 114 (MDERPETELI…NLNAGVGFQA (114 aa)). Transmembrane regions (helical) follow at residues 115 to 135 (LVLPVAFAFLGWSWGILSLTI) and 136 to 156 (AYCWQLYTLWILVQLHEAVPG). At 157 to 176 (KRYNRYVELAQAAFGERLGV) the chain is on the cytoplasmic side. The chain crosses the membrane as a helical span at residues 177–197 (WLALFPTVYLSAGTATALILI). The Extracellular portion of the chain corresponds to 198-217 (GGETMKLFFQIVCGPLCTSN). The chain crosses the membrane as a helical span at residues 218–238 (PLTTVEWYLVFTSLCIVLSQL). At 239 to 243 (PNLNS) the chain is on the cytoplasmic side. A helical transmembrane segment spans residues 244–264 (IAGLSLIGAVTAITYSTMVWV). Residues 265-282 (LSVSQPRPATISYEPLSM) lie on the Extracellular side of the membrane. A helical transmembrane segment spans residues 283-303 (PSTSGSLFAVLNALGIIAFAF). Over 304–333 (RGHNLVLEIQSTMPSTFKHPAHVPMWRGAK) the chain is Cytoplasmic. The chain crosses the membrane as a helical span at residues 334-354 (ISYFLIALCIFPISIGGFWAY). Over 355–377 (GNLMPSGGMLAALYAFHIHDIPR) the chain is Extracellular. A helical transmembrane segment spans residues 378 to 398 (GLLATAFLLVVFSCLSSFQIY). The Cytoplasmic segment spans residues 399-427 (SMPAFDSFEAGYTSRTNKPCSIWVRSGFR). Residues 428 to 448 (VFFGFVSFFIGVALPFLSSLA) traverse the membrane as a helical segment. Residue Gly-449 is a topological domain, extracellular. Residues 450-470 (LLGGLTLPVTFAYPCFMWVLI) form a helical membrane-spanning segment. The Cytoplasmic segment spans residues 471 to 485 (KKPAKYSFNWYFHWG). Residues 486 to 506 (LGWLGVAFSLAFSIGGIWSMV) traverse the membrane as a helical segment. The Extracellular segment spans residues 507–519 (TNGLKLKFFKPPN).

The protein belongs to the amino acid/polyamine transporter 2 family. Amino acid/auxin permease (AAAP) (TC 2.A.18.2) subfamily.

Its subcellular location is the cell membrane. In terms of biological role, amino acid transporter. The sequence is that of Lysine histidine transporter-like 8 (AATL1) from Arabidopsis thaliana (Mouse-ear cress).